A 499-amino-acid chain; its full sequence is Serine/threonine protein phosphatase 2A 57 kDa regulatory subunit B' beta isoform (499 aa).

Over residues 1-13 the composition is skewed to basic residues; that stretch reads MFKKIMKGGHRKP. The disordered stretch occupies residues 1–65; it reads MFKKIMKGGH…PVTATPPPPP (65 aa).

The protein belongs to the phosphatase 2A regulatory subunit B56 family. PP2A consists of a common heteromeric enzyme, composed of a catalytic subunit (subunits C), a constant regulatory subunit (subunit A), and a variety of regulatory subunits such as subunits B (the R2/B/PR55/B55, R3/B''/PR72/PR130/PR59 and R5/B'/B56 families). Interacts with BZR1. Interacts with BRI1. Interacts with SRK2E/OST1. Expressed ubiquitously, higher levels in cotyledons and flowers.

It is found in the nucleus. It localises to the cytoplasm. Its function is as follows. The B regulatory subunit may modulate substrate selectivity and catalytic activity, and may also direct the localization of the catalytic enzyme to a particular subcellular compartment. Required for the formation of the PP2A holoenzyme that positively regulates brassinosteroid signaling by dephosphorylating and activating BZR1. This is Serine/threonine protein phosphatase 2A 57 kDa regulatory subunit B' beta isoform (B'BETA) from Arabidopsis thaliana (Mouse-ear cress).